Reading from the N-terminus, the 503-residue chain is MDFSIKACDWSKGSTNGFLTGKSDCIVIGVFESQTLSGAALEIDAATKGLLTRIIKAGDMDGKTGSTVFLHEVQGIGASRVLLVGLGKQDAFTQKVYGDAVRAAWRAILGTKVAQVTFTLVQAPVKERSSDWAVRAAILALRELTYKFTQMKSKPDTSTRALKRIVFSVDAADEKLAKVAVKQGVALANGMDLTKDLGNLPGNVCTPTYLGNTAKKLAKDWKLKVEVLGQKQIEALKMGSFLAVTQGSVEPPQFIVLQYQGGAAKAAPVVLVGKGITFDTGGISLKPGDSMDEMKYDMCGAGSVLGTLRAVAEMGLKLNVVGIIPTCENMPAGNATKPGDIVTSMKGLTIEVLNTDAEGRLILCDALTYAERFKPAAVIDIATLTGACIIALGHHNSGLFSKDDALAGELLDASKEASDPAWRLPLDDEYQDQLKSNFADIANIGGRPAGSVTAACFLSRFTEAYPWAHLDIAGTAWKSGAAKGATGRPVPLLAQFLIDRAAQ.

Mn(2+) is bound by residues lysine 274 and aspartate 279. Lysine 286 is an active-site residue. Mn(2+) contacts are provided by aspartate 297, aspartate 356, and glutamate 358. The active site involves arginine 360.

This sequence belongs to the peptidase M17 family. It depends on Mn(2+) as a cofactor.

It is found in the cytoplasm. It carries out the reaction Release of an N-terminal amino acid, Xaa-|-Yaa-, in which Xaa is preferably Leu, but may be other amino acids including Pro although not Arg or Lys, and Yaa may be Pro. Amino acid amides and methyl esters are also readily hydrolyzed, but rates on arylamides are exceedingly low.. It catalyses the reaction Release of an N-terminal amino acid, preferentially leucine, but not glutamic or aspartic acids.. Functionally, presumably involved in the processing and regular turnover of intracellular proteins. Catalyzes the removal of unsubstituted N-terminal amino acids from various peptides. The sequence is that of Probable cytosol aminopeptidase from Paraburkholderia phymatum (strain DSM 17167 / CIP 108236 / LMG 21445 / STM815) (Burkholderia phymatum).